Here is a 520-residue protein sequence, read N- to C-terminus: Ribonuclease Y (520 aa).

Residues 4 to 24 (TMFTIISILLSLICLVVGYFV) traverse the membrane as a helical segment. Residues 210–273 (TVSVVNLPND…ETARIALDKL (64 aa)) enclose the KH domain. An HD domain is found at 336–429 (VLKHSIEVAH…VAAADALSAA (94 aa)).

It belongs to the RNase Y family.

It localises to the cell membrane. Its function is as follows. Endoribonuclease that initiates mRNA decay. This chain is Ribonuclease Y, found in Bacillus pumilus (strain SAFR-032).